The chain runs to 109 residues: MNIFRSLLYFFFTGLCEIGGGYLVWLWLKEGKSIKYALLGWGLLMLYGVLPALQTANFGRVYSAYGGAFVIFSLLWGWKVDRIPPDSYDWLGTLIILIGASVIMYAPRN.

4 helical membrane passes run 7-27, 36-56, 58-78, and 87-107; these read LLYFFFTGLCEIGGGYLVWLW, YALLGWGLLMLYGVLPALQTA, FGRVYSAYGGAFVIFSLLWGW, and SYDWLGTLIILIGASVIMYAP.

The protein belongs to the UPF0060 family.

Its subcellular location is the cell inner membrane. The chain is UPF0060 membrane protein PCC8801_1733 from Rippkaea orientalis (strain PCC 8801 / RF-1) (Cyanothece sp. (strain PCC 8801)).